The sequence spans 663 residues: LEAF RUST 10 DISEASE-RESISTANCE LOCUS RECEPTOR-LIKE PROTEIN KINASE-like 1.4 (663 aa).

The signal sequence occupies residues 1-25 (MYYPLSSSLMFFILFSLFYHLPCES). Residues 26 to 241 (SKCESLFQCG…TSLSIGAKAG (216 aa)) are Extracellular-facing. N-linked (GlcNAc...) asparagine glycosylation is found at Asn36, Asn64, Asn106, Asn137, and Asn208. The helical transmembrane segment at 242–262 (IAVASVSGLAILLLAGLFLCI) threads the bilayer. At 263-663 (RRRRKTQDAQ…TSSSDTAASL (401 aa)) the chain is on the cytoplasmic side. The segment at 282 to 304 (SYSSRDTSRNPTSTTISSSSNHS) is disordered. Residues 290-304 (RNPTSTTISSSSNHS) show a composition bias toward low complexity. One can recognise a Protein kinase domain in the interval 334 to 609 (ENFSRELGDG…DEIVEILRGI (276 aa)). Residues 340–348 (LGDGGFGTV) and Lys362 each bind ATP. Asp458 functions as the Proton acceptor in the catalytic mechanism. The segment at 637 to 663 (LLRNSVPPPISPETDKWTSSSDTAASL) is disordered. Over residues 653–663 (WTSSSDTAASL) the composition is skewed to polar residues.

This sequence belongs to the protein kinase superfamily. Ser/Thr protein kinase family.

The protein resides in the cell membrane. The catalysed reaction is L-seryl-[protein] + ATP = O-phospho-L-seryl-[protein] + ADP + H(+). It catalyses the reaction L-threonyl-[protein] + ATP = O-phospho-L-threonyl-[protein] + ADP + H(+). This Arabidopsis thaliana (Mouse-ear cress) protein is LEAF RUST 10 DISEASE-RESISTANCE LOCUS RECEPTOR-LIKE PROTEIN KINASE-like 1.4.